Consider the following 544-residue polypeptide: Chitin-inducible gibberellin-responsive protein 2 (544 aa).

Positions 1-123 (MADTPTSRMI…VGASCVTEDP (123 aa)) are disordered. Composition is skewed to polar residues over residues 15–30 (NIPS…SDNP), 63–74 (SQATPNKYTLDS), and 86–101 (PSSQ…PLSQ). One can recognise a GRAS domain in the interval 165 to 544 (RMMGIPRGNL…RPLVVSSAWH (380 aa)). A leucine repeat I (LRI) region spans residues 172 to 232 (GNLKELLIAC…VARLASSGIS (61 aa)). The VHIID stretch occupies residues 251-316 (MHFLYEACPY…GGPPTVRITG (66 aa)). A VHIID motif is present at residues 282–286 (IHIID). The interval 332–364 (LVGRRLSHIASLCKVPFEFHPLAISGSKVEAAH) is leucine repeat II (LRII). The PFYRE stretch occupies residues 373–467 (LAVNFTLELH…QHCLAREIVN (95 aa)). Residues 470–544 (ACEGEERAER…RPLVVSSAWH (75 aa)) are SAW.

The protein belongs to the GRAS family.

The protein resides in the nucleus. In terms of biological role, may play a regulatory role in the early step of oligosaccharide elicitor response, downstream of the membrane-associated high-affinity chitin-binding protein. The chain is Chitin-inducible gibberellin-responsive protein 2 (CIGR2) from Oryza sativa subsp. japonica (Rice).